The following is a 275-amino-acid chain: Large ribosomal subunit protein uL2c (275 aa).

The disordered stretch occupies residues 225–252; it reads MNPCDHPHGGGEGRSPIGRAKPVTPWGK.

This sequence belongs to the universal ribosomal protein uL2 family. In terms of assembly, part of the 50S ribosomal subunit.

It localises to the plastid. The protein localises to the chloroplast. This is Large ribosomal subunit protein uL2c (rpl2) from Guillardia theta (Cryptophyte).